The primary structure comprises 148 residues: MLKSLIYELLKSSIKQEEHYYSKTFFYFLNILGLVFIIIANYCYSSDSMKFYFLMQIGIISVISSMVIEAVRCYLKYKNRYRHLDCLRSNSGVLVGSISKTLIDLFSTKTLIRYLPTIIRYVPSTVITFIICTYIKRKFLKNFMYYTR.

Helical transmembrane passes span 20–42 (YYSK…IANY), 52–74 (YFLM…VRCY), and 118–135 (IIRY…CTYI).

It is found in the cell membrane. This is an uncharacterized protein from Rickettsia prowazekii (strain Madrid E).